The following is a 264-amino-acid chain: Apolipoprotein A-I (264 aa).

The N-terminal stretch at M1–A18 is a signal peptide. 2 repeat units span residues L67–A88 and P89–T110. Residues L67 to A264 are 10 X approximate tandem repeats. One copy of the 3; half-length repeat lies at K111–R121. A run of 5 repeats spans residues P122–T143, P144–T165, P166–A187, P188–I209, and P210–T231. One copy of the 9; half-length repeat lies at P232–T242. Copy 10 of the repeat occupies P243–A264.

The protein belongs to the apolipoprotein A1/A4/E family. In terms of assembly, homodimer. As to expression, major protein of plasma HDL, also found in chylomicrons.

Its subcellular location is the secreted. Functionally, participates in the reverse transport of cholesterol from tissues to the liver for excretion by promoting cholesterol efflux from tissues and by acting as a cofactor for the lecithin cholesterol acyltransferase (LCAT). In Gallus gallus (Chicken), this protein is Apolipoprotein A-I (APOA1).